Reading from the N-terminus, the 388-residue chain is Protein RecA (388 aa).

79–86 (GPESSGKT) is an ATP binding site. The segment at 347 to 388 (IDGEEVSEQDTENKKDEPKKEEAVNEEVPLDLGDELEIEIEE) is disordered. Basic and acidic residues predominate over residues 357–369 (TENKKDEPKKEEA). The segment covering 370–388 (VNEEVPLDLGDELEIEIEE) has biased composition (acidic residues).

Belongs to the RecA family.

It is found in the cytoplasm. Its function is as follows. Can catalyze the hydrolysis of ATP in the presence of single-stranded DNA, the ATP-dependent uptake of single-stranded DNA by duplex DNA, and the ATP-dependent hybridization of homologous single-stranded DNAs. It interacts with LexA causing its activation and leading to its autocatalytic cleavage. The chain is Protein RecA from Streptococcus pneumoniae (strain Hungary19A-6).